A 431-amino-acid polypeptide reads, in one-letter code: Glycolipid 2-alpha-mannosyltransferase 1 (431 aa).

Topologically, residues 1 to 9 are cytoplasmic; that stretch reads MASTRSNAR. Residues 10 to 28 traverse the membrane as a helical; Signal-anchor for type II membrane protein segment; the sequence is LIRFGIFALVLIGCGYILT. The Lumenal portion of the chain corresponds to 29–431; sequence RGSSFQPPNY…RQKGWEKYTA (403 aa). The segment covering 35–44 has biased composition (polar residues); it reads PPNYQQTQSP. The disordered stretch occupies residues 35-73; it reads PPNYQQTQSPAAHEKQTGNVAAGGGAGSGSAGAQVPLGK. The span at 55 to 64 shows a compositional bias: gly residues; it reads AAGGGAGSGS. Residue E318 is the Nucleophile of the active site.

The protein belongs to the glycosyltransferase 15 family.

It localises to the golgi apparatus membrane. The protein operates within protein modification; protein glycosylation. Involved in O-glycosylation of cell wall and secreted proteins. Transfers an alpha-D-mannosyl residue from GDP-mannose into lipid-linked oligosaccharide, forming an alpha-(1-&gt;2)-D-mannosyl-D-mannose linkage. Mainly responsible for the addition of the second mannose residue in an O-linked mannose pentamer. Can also substitute for MNT2 by adding the third mannose residue. Important for adherence to host surfaces and for virulence. This Candida albicans (strain SC5314 / ATCC MYA-2876) (Yeast) protein is Glycolipid 2-alpha-mannosyltransferase 1 (MNT1).